The following is a 149-amino-acid chain: Large ribosomal subunit protein uL15 (149 aa).

2 stretches are compositionally biased toward basic residues: residues Met1–His14 and Arg21–Gly30. Positions Met1–His39 are disordered. 2 short sequence motifs (nuclear localization signal) span residues Lys7–Gly13 and Lys24–Gly30. Lys96 is covalently cross-linked (Glycyl lysine isopeptide (Lys-Gly) (interchain with G-Cter in ubiquitin)).

It belongs to the universal ribosomal protein uL15 family. In terms of assembly, component of the large ribosomal subunit (LSU). Mature yeast ribosomes consist of a small (40S) and a large (60S) subunit. The 40S small subunit contains 1 molecule of ribosomal RNA (18S rRNA) and 33 different proteins (encoded by 57 genes). The large 60S subunit contains 3 rRNA molecules (25S, 5.8S and 5S rRNA) and 46 different proteins (encoded by 81 genes).

It is found in the cytoplasm. Functionally, component of the ribosome, a large ribonucleoprotein complex responsible for the synthesis of proteins in the cell. The small ribosomal subunit (SSU) binds messenger RNAs (mRNAs) and translates the encoded message by selecting cognate aminoacyl-transfer RNA (tRNA) molecules. The large subunit (LSU) contains the ribosomal catalytic site termed the peptidyl transferase center (PTC), which catalyzes the formation of peptide bonds, thereby polymerizing the amino acids delivered by tRNAs into a polypeptide chain. The nascent polypeptides leave the ribosome through a tunnel in the LSU and interact with protein factors that function in enzymatic processing, targeting, and the membrane insertion of nascent chains at the exit of the ribosomal tunnel. This Saccharomyces cerevisiae (strain ATCC 204508 / S288c) (Baker's yeast) protein is Large ribosomal subunit protein uL15.